We begin with the raw amino-acid sequence, 477 residues long: Leukotoxin export protein LtxD (477 aa).

Residues 64–84 (IMLFLTLAIIVSIFSNVEIIA) traverse the membrane as a helical segment. Residues 206-287 (LNLNKKEAEK…ENEVLLAKEE (82 aa)) are a coiled coil.

It belongs to the membrane fusion protein (MFP) (TC 8.A.1) family. Probably part of a complex composed of LtxB, LtxD and TdeA, which forms a single transport channel across the two membranes.

It localises to the cell inner membrane. Involved in the export of the LtxA leukotoxin. This chain is Leukotoxin export protein LtxD, found in Aggregatibacter actinomycetemcomitans (Actinobacillus actinomycetemcomitans).